A 197-amino-acid chain; its full sequence is Holliday junction branch migration complex subunit RuvA (197 aa).

The domain I stretch occupies residues 1 to 64 (MIGRLRGIVA…EDSVSLYGFL (64 aa)). The interval 65–143 (REGERRLFRD…QFGAGGALPT (79 aa)) is domain II. The segment at 144 to 153 (GSGPAPADPL) is flexible linker. A domain III region spans residues 153 to 197 (LSDATVALQQLGYKPAEAARMAREAFNEGDEVAIVIRKALQSALR).

Belongs to the RuvA family. Homotetramer. Forms an RuvA(8)-RuvB(12)-Holliday junction (HJ) complex. HJ DNA is sandwiched between 2 RuvA tetramers; dsDNA enters through RuvA and exits via RuvB. An RuvB hexamer assembles on each DNA strand where it exits the tetramer. Each RuvB hexamer is contacted by two RuvA subunits (via domain III) on 2 adjacent RuvB subunits; this complex drives branch migration. In the full resolvosome a probable DNA-RuvA(4)-RuvB(12)-RuvC(2) complex forms which resolves the HJ.

The protein resides in the cytoplasm. In terms of biological role, the RuvA-RuvB-RuvC complex processes Holliday junction (HJ) DNA during genetic recombination and DNA repair, while the RuvA-RuvB complex plays an important role in the rescue of blocked DNA replication forks via replication fork reversal (RFR). RuvA specifically binds to HJ cruciform DNA, conferring on it an open structure. The RuvB hexamer acts as an ATP-dependent pump, pulling dsDNA into and through the RuvAB complex. HJ branch migration allows RuvC to scan DNA until it finds its consensus sequence, where it cleaves and resolves the cruciform DNA. The chain is Holliday junction branch migration complex subunit RuvA from Stenotrophomonas maltophilia (strain R551-3).